The chain runs to 336 residues: Ketol-acid reductoisomerase (NADP(+)) 1 (336 aa).

The KARI N-terminal Rossmann domain maps to Ala-2 to Thr-181. NADP(+) is bound by residues Tyr-25–Gln-28, Arg-48, Ser-52, and Asp-82–Gln-85. The active site involves His-107. Gly-133 is an NADP(+) binding site. Positions Thr-182–Val-327 constitute a KARI C-terminal knotted domain. 4 residues coordinate Mg(2+): Asp-190, Glu-194, Glu-226, and Glu-230. Ser-251 serves as a coordination point for substrate.

The protein belongs to the ketol-acid reductoisomerase family. It depends on Mg(2+) as a cofactor.

It catalyses the reaction (2R)-2,3-dihydroxy-3-methylbutanoate + NADP(+) = (2S)-2-acetolactate + NADPH + H(+). It carries out the reaction (2R,3R)-2,3-dihydroxy-3-methylpentanoate + NADP(+) = (S)-2-ethyl-2-hydroxy-3-oxobutanoate + NADPH + H(+). The protein operates within amino-acid biosynthesis; L-isoleucine biosynthesis; L-isoleucine from 2-oxobutanoate: step 2/4. It functions in the pathway amino-acid biosynthesis; L-valine biosynthesis; L-valine from pyruvate: step 2/4. In terms of biological role, involved in the biosynthesis of branched-chain amino acids (BCAA). Catalyzes an alkyl-migration followed by a ketol-acid reduction of (S)-2-acetolactate (S2AL) to yield (R)-2,3-dihydroxy-isovalerate. In the isomerase reaction, S2AL is rearranged via a Mg-dependent methyl migration to produce 3-hydroxy-3-methyl-2-ketobutyrate (HMKB). In the reductase reaction, this 2-ketoacid undergoes a metal-dependent reduction by NADPH to yield (R)-2,3-dihydroxy-isovalerate. This chain is Ketol-acid reductoisomerase (NADP(+)) 1, found in Bacillus thuringiensis subsp. konkukian (strain 97-27).